Consider the following 159-residue polypeptide: Peripheral myelin protein 22 (159 aa).

Met-1 is a topological domain (cytoplasmic). Residues 2 to 31 traverse the membrane as a helical segment; sequence LLLLLGIIVLHVAVLVLLFVATIVSQWIVG. Residues 32–64 lie on the Extracellular side of the membrane; the sequence is NGHATDLWQNCSTTSGNVQHCLSSSANEWLQSV. N-linked (GlcNAc...) asparagine glycosylation occurs at Asn-41. The chain crosses the membrane as a helical span at residues 65–91; the sequence is QATMILSIIFSVLSLFLFFCQLFTLTK. Topologically, residues 92-95 are cytoplasmic; that stretch reads GGRF. Residues 96 to 119 traverse the membrane as a helical segment; it reads YITGIFQILAGLCVMSAASIYTVR. Topologically, residues 120 to 133 are extracellular; it reads HPEWHLDSAYSYGF. Residues 134–156 form a helical membrane-spanning segment; that stretch reads AYILAWVAFPLALLSGVVYVILR. Residues 157-159 lie on the Cytoplasmic side of the membrane; that stretch reads KRE.

The protein belongs to the PMP-22/EMP/MP20 family. In terms of processing, ubiquitinated by the DCX(DCAF13) E3 ubiquitin ligase complex, leading to its degradation.

It localises to the cell membrane. Its function is as follows. Might be involved in growth regulation, and in myelinization in the peripheral nervous system. This chain is Peripheral myelin protein 22 (PMP22), found in Equus caballus (Horse).